Consider the following 414-residue polypeptide: ATP-dependent Clp protease ATP-binding subunit ClpX (414 aa).

In terms of domain architecture, ClpX-type ZB spans 1-51 (MADSKTKKKCSFCGRSENEVGFLITGMNGYICDSCATQAYEITQEALGEGR). Residues Cys10, Cys13, Cys32, and Cys35 each contribute to the Zn(2+) site. 120 to 127 (STGTGKTL) serves as a coordination point for ATP.

This sequence belongs to the ClpX chaperone family. In terms of assembly, component of the ClpX-ClpP complex. Forms a hexameric ring that, in the presence of ATP, binds to fourteen ClpP subunits assembled into a disk-like structure with a central cavity, resembling the structure of eukaryotic proteasomes.

Functionally, ATP-dependent specificity component of the Clp protease. It directs the protease to specific substrates. Can perform chaperone functions in the absence of ClpP. The sequence is that of ATP-dependent Clp protease ATP-binding subunit ClpX from Bacteroides thetaiotaomicron (strain ATCC 29148 / DSM 2079 / JCM 5827 / CCUG 10774 / NCTC 10582 / VPI-5482 / E50).